Consider the following 635-residue polypeptide: 1-deoxy-D-xylulose-5-phosphate synthase (635 aa).

Residues histidine 79 and 120-122 (GHS) each bind thiamine diphosphate. Aspartate 151 provides a ligand contact to Mg(2+). Residues 152-153 (GA), asparagine 182, tyrosine 291, and glutamate 372 contribute to the thiamine diphosphate site. Asparagine 182 lines the Mg(2+) pocket.

It belongs to the transketolase family. DXPS subfamily. Homodimer. The cofactor is Mg(2+). Requires thiamine diphosphate as cofactor.

It carries out the reaction D-glyceraldehyde 3-phosphate + pyruvate + H(+) = 1-deoxy-D-xylulose 5-phosphate + CO2. Its pathway is metabolic intermediate biosynthesis; 1-deoxy-D-xylulose 5-phosphate biosynthesis; 1-deoxy-D-xylulose 5-phosphate from D-glyceraldehyde 3-phosphate and pyruvate: step 1/1. Catalyzes the acyloin condensation reaction between C atoms 2 and 3 of pyruvate and glyceraldehyde 3-phosphate to yield 1-deoxy-D-xylulose-5-phosphate (DXP). The chain is 1-deoxy-D-xylulose-5-phosphate synthase from Xylella fastidiosa (strain M12).